An 805-amino-acid chain; its full sequence is Probable phosphoketolase (805 aa).

Belongs to the XFP family. The cofactor is thiamine diphosphate.

The chain is Probable phosphoketolase from Synechocystis sp. (strain ATCC 27184 / PCC 6803 / Kazusa).